A 360-amino-acid polypeptide reads, in one-letter code: DNA replication and repair protein RecF (360 aa).

30–37 (GHNGSGKT) lines the ATP pocket.

Belongs to the RecF family.

Its subcellular location is the cytoplasm. Functionally, the RecF protein is involved in DNA metabolism; it is required for DNA replication and normal SOS inducibility. RecF binds preferentially to single-stranded, linear DNA. It also seems to bind ATP. The chain is DNA replication and repair protein RecF from Actinobacillus pleuropneumoniae serotype 5b (strain L20).